The sequence spans 338 residues: Taste receptor type 2 member 39 (338 aa).

Residues 1–30 (MLGRCFPPDTKEKQQLRMTKLCDPAESELS) are Extracellular-facing. A helical membrane pass occupies residues 31-51 (PFLITLILAVLLAEYLIGIIA). The Cytoplasmic portion of the chain corresponds to 52-74 (NGFIMAIHAAEWVQNKAVSTSGR). The helical transmembrane segment at 75 to 95 (ILVFLSVSRIALQSLMMLEIT) threads the bilayer. Topologically, residues 96-116 (ISSTSLSFYSEDAVYYAFKIS) are extracellular. The chain crosses the membrane as a helical span at residues 117–137 (FIFLNFCSLWFAAWLSFFYFV). Residues 138 to 156 (KIANFSYPLFLKLRWRITG) are Cytoplasmic-facing. The helical transmembrane segment at 157–177 (LIPWLLWLSVFISFSHSMFCI) threads the bilayer. Residues 178-205 (NIXTVYCNNSFPIHSSNSTKKTYLSEIN) lie on the Extracellular side of the membrane. Residues Asn185 and Asn194 are each glycosylated (N-linked (GlcNAc...) asparagine). The helical transmembrane segment at 206 to 226 (VVGLAFFFNLGIVTPLIMFIL) threads the bilayer. At 227–262 (TATLLILSLKRHTLHMGSNATGSNDPSMEAHMGAIK) the chain is on the cytoplasmic side. The chain crosses the membrane as a helical span at residues 263 to 283 (ATSYFLILYIFNAVALFIYLS). The Extracellular portion of the chain corresponds to 284–291 (NMFDINSL). A helical transmembrane segment spans residues 292 to 312 (WNNLCQIIMAAYPASHSILLI). Topologically, residues 313–338 (QDNPGLRRAWKRLQLRLHLYPKEWTL) are cytoplasmic.

Belongs to the G-protein coupled receptor T2R family.

It is found in the membrane. Its function is as follows. Receptor that may play a role in the perception of bitterness and is gustducin-linked. May play a role in sensing the chemical composition of the gastrointestinal content. The activity of this receptor may stimulate alpha gustducin, mediate PLC-beta-2 activation and lead to the gating of TRPM5. This chain is Taste receptor type 2 member 39 (TAS2R39), found in Gorilla gorilla gorilla (Western lowland gorilla).